We begin with the raw amino-acid sequence, 1016 residues long: Enhancer of polycomb-like protein 1 (1016 aa).

5 disordered regions span residues 1–50 (MAIH…NDLE), 96–119 (LLGSQNEDGDKKKDDSDKKTDASV), 450–488 (KEEDEDKESSKIKRDKRSRFDSSREGSATSMPGSATIGT), 499–518 (GQVHHTQEASSSSQPYVKLP), and 842–1016 (ARMR…PNRK). Positions 35–50 (YKQSDLPTLNASNDLE) are enriched in polar residues. Basic and acidic residues-rich tracts occupy residues 103 to 116 (DGDKKKDDSDKKTD) and 457 to 473 (ESSKIKRDKRSRFDSSR). Polar residues predominate over residues 475 to 488 (GSATSMPGSATIGT). Residues 842–883 (ARMRTLQQQQRNNKQQAAGQSSGSSSASLGSNTNSNSSISGQ) are compositionally biased toward low complexity. Residues 884 to 902 (ADQGQTNLTNSGITRQGGA) show a composition bias toward polar residues. The segment covering 904–923 (VNGSQTSTTNNTRSSVSGGS) has biased composition (low complexity). The span at 928–956 (LPTQSSQRSNTNSPLLASQPQGYSQQQKF) shows a compositional bias: polar residues. Low complexity predominate over residues 960 to 971 (PPTSQSQSQSPT). Polar residues predominate over residues 976-994 (QLQTSKMYNKHGSNITPSN).

This sequence belongs to the enhancer of polycomb family. In terms of assembly, component of the NuA4 histone acetyltransferase complex.

It is found in the nucleus. In terms of biological role, component of the NuA4 histone acetyltransferase complex which is involved in transcriptional activation of selected genes principally by acetylation of nucleosomal histone H4 and H2A. The NuA4 complex is also involved in DNA repair. Involved in gene silencing by neighboring heterochromatin, blockage of the silencing spreading along the chromosome, and required for cell cycle progression through G2/M. This chain is Enhancer of polycomb-like protein 1 (EPL1), found in Debaryomyces hansenii (strain ATCC 36239 / CBS 767 / BCRC 21394 / JCM 1990 / NBRC 0083 / IGC 2968) (Yeast).